The following is a 359-amino-acid chain: WAT1-related protein At5g64700 (359 aa).

The next 10 membrane-spanning stretches (helical) occupy residues 10-30 (LMVTIIQVIYTIMFLISKAVF), 37-57 (FVFVFYRQAFATIFLAPLAFF), 66-86 (LSFVTFIKIFMLSLFGVTLSL), 100-120 (LAAATTASLPAITFFLALLFG), 135-155 (LVGITVCMGGVIILAIYKGPL), 186-206 (WLKGCVLMITSNILWGLWLVL), 218-238 (LYFTTLHCLLSSIQSFVIAIA), 256-276 (AVIYCGFIVTGVAYYLQSWVI), 282-302 (VFLSMFTPLSLLFTLLSSAIL), and 306-326 (IISLGSIVGGLLLIIGLYCVL). 2 consecutive EamA domains span residues 18–136 (IYTI…AKLV) and 198–326 (ILWG…YCVL).

Belongs to the drug/metabolite transporter (DMT) superfamily. Plant drug/metabolite exporter (P-DME) (TC 2.A.7.4) family.

It is found in the membrane. This chain is WAT1-related protein At5g64700, found in Arabidopsis thaliana (Mouse-ear cress).